The chain runs to 244 residues: MSLILLPAVDVVEGRAVRLVQGKAGSENDYGSALDAALCWQRDGADWIHLVDLDAAFGRGSNRELLSEMVGKLDVQVELSGGIRDDDSLNAALATGCARVNLGTAACENPHWCAQVIAEHGDKIAVGLDVQIVDGQHRLRGRGWETDGGDLWDVLENLDRQGCSRFIVTDVTKDGTLDGPNLDLLASVSDRTNVPVIASGGVSSLDDLRAIAKFTERGIEGAIVGKALYAERFTLPQALAVVRM.

Asp10 (proton acceptor) is an active-site residue. Catalysis depends on Asp129, which acts as the Proton donor.

It belongs to the HisA/HisF family.

Its subcellular location is the cytoplasm. The catalysed reaction is 1-(5-phospho-beta-D-ribosyl)-5-[(5-phospho-beta-D-ribosylamino)methylideneamino]imidazole-4-carboxamide = 5-[(5-phospho-1-deoxy-D-ribulos-1-ylimino)methylamino]-1-(5-phospho-beta-D-ribosyl)imidazole-4-carboxamide. It catalyses the reaction N-(5-phospho-beta-D-ribosyl)anthranilate = 1-(2-carboxyphenylamino)-1-deoxy-D-ribulose 5-phosphate. It participates in amino-acid biosynthesis; L-histidine biosynthesis; L-histidine from 5-phospho-alpha-D-ribose 1-diphosphate: step 4/9. It functions in the pathway amino-acid biosynthesis; L-tryptophan biosynthesis; L-tryptophan from chorismate: step 3/5. In terms of biological role, involved in both the histidine and tryptophan biosynthetic pathways. This chain is Phosphoribosyl isomerase A (priA), found in Mycobacterium leprae (strain TN).